Reading from the N-terminus, the 232-residue chain is LexA repressor (232 aa).

The tract at residues 1–25 is disordered; that stretch reads MSDDSSDSTDAPGTSRSRDSGLTER. Over residues 16–25 the composition is skewed to basic and acidic residues; the sequence is RSRDSGLTER. Positions 46 to 66 form a DNA-binding region, H-T-H motif; the sequence is IREIGDAVGLTSTSSVAHQLR. Residues Ser156 and Lys193 each act as for autocatalytic cleavage activity in the active site.

The protein belongs to the peptidase S24 family. As to quaternary structure, homodimer.

It carries out the reaction Hydrolysis of Ala-|-Gly bond in repressor LexA.. In terms of biological role, represses a number of genes involved in the response to DNA damage (SOS response), including recA and lexA. In the presence of single-stranded DNA, RecA interacts with LexA causing an autocatalytic cleavage which disrupts the DNA-binding part of LexA, leading to derepression of the SOS regulon and eventually DNA repair. This chain is LexA repressor, found in Mycolicibacterium gilvum (strain PYR-GCK) (Mycobacterium gilvum (strain PYR-GCK)).